Consider the following 264-residue polypeptide: Thiazole synthase (264 aa).

The active-site Schiff-base intermediate with DXP is lysine 106. 1-deoxy-D-xylulose 5-phosphate is bound by residues glycine 167, 193 to 194 (AG), and 215 to 216 (NT).

Belongs to the ThiG family. In terms of assembly, homotetramer. Forms heterodimers with either ThiH or ThiS.

The protein resides in the cytoplasm. The enzyme catalyses [ThiS sulfur-carrier protein]-C-terminal-Gly-aminoethanethioate + 2-iminoacetate + 1-deoxy-D-xylulose 5-phosphate = [ThiS sulfur-carrier protein]-C-terminal Gly-Gly + 2-[(2R,5Z)-2-carboxy-4-methylthiazol-5(2H)-ylidene]ethyl phosphate + 2 H2O + H(+). Its pathway is cofactor biosynthesis; thiamine diphosphate biosynthesis. Functionally, catalyzes the rearrangement of 1-deoxy-D-xylulose 5-phosphate (DXP) to produce the thiazole phosphate moiety of thiamine. Sulfur is provided by the thiocarboxylate moiety of the carrier protein ThiS. In vitro, sulfur can be provided by H(2)S. In Xylella fastidiosa (strain Temecula1 / ATCC 700964), this protein is Thiazole synthase.